A 318-amino-acid polypeptide reads, in one-letter code: Aspartate carbamoyltransferase catalytic subunit (318 aa).

Residues Arg-58 and Thr-59 each contribute to the carbamoyl phosphate site. Lys-86 lines the L-aspartate pocket. Residues Arg-108, His-141, and Gln-144 each contribute to the carbamoyl phosphate site. L-aspartate is bound by residues Arg-174 and Arg-226. Carbamoyl phosphate contacts are provided by Gly-270 and Pro-271.

Belongs to the aspartate/ornithine carbamoyltransferase superfamily. ATCase family. In terms of assembly, heterododecamer (2C3:3R2) of six catalytic PyrB chains organized as two trimers (C3), and six regulatory PyrI chains organized as three dimers (R2).

It carries out the reaction carbamoyl phosphate + L-aspartate = N-carbamoyl-L-aspartate + phosphate + H(+). It participates in pyrimidine metabolism; UMP biosynthesis via de novo pathway; (S)-dihydroorotate from bicarbonate: step 2/3. Catalyzes the condensation of carbamoyl phosphate and aspartate to form carbamoyl aspartate and inorganic phosphate, the committed step in the de novo pyrimidine nucleotide biosynthesis pathway. The sequence is that of Aspartate carbamoyltransferase catalytic subunit from Lactobacillus delbrueckii subsp. bulgaricus (strain ATCC 11842 / DSM 20081 / BCRC 10696 / JCM 1002 / NBRC 13953 / NCIMB 11778 / NCTC 12712 / WDCM 00102 / Lb 14).